The sequence spans 206 residues: Triosephosphate isomerase (206 aa).

Histidine 76 acts as the Electrophile in catalysis. The active-site Proton acceptor is glutamate 146.

The protein belongs to the triosephosphate isomerase family. In terms of assembly, homodimer.

It carries out the reaction D-glyceraldehyde 3-phosphate = dihydroxyacetone phosphate. Its pathway is carbohydrate biosynthesis; gluconeogenesis. The protein operates within carbohydrate degradation; glycolysis; D-glyceraldehyde 3-phosphate from glycerone phosphate: step 1/1. This Anopheles merus (Mosquito) protein is Triosephosphate isomerase (Tpi).